The chain runs to 107 residues: Heme-degrading monooxygenase (107 aa).

The 92-residue stretch at 2–93 (VIVANKTLIR…DYILGNEIEF (92 aa)) folds into the ABM domain. Fe cation is bound at residue Asn-6. His-76 is a binding site for heme.

It belongs to the antibiotic biosynthesis monooxygenase family. Heme-degrading monooxygenase IsdG subfamily. As to quaternary structure, homodimer.

The protein localises to the cytoplasm. The enzyme catalyses heme b + 3 reduced [NADPH--hemoprotein reductase] + 3 O2 = biliverdin IXalpha + CO + Fe(2+) + 3 oxidized [NADPH--hemoprotein reductase] + 3 H2O + H(+). Allows bacterial pathogens to use the host heme as an iron source. Catalyzes the oxidative degradation of the heme macrocyclic porphyrin ring to the biliverdin in the presence of a suitable electron donor such as ascorbate or NADPH--cytochrome P450 reductase, with subsequent release of free iron. The polypeptide is Heme-degrading monooxygenase (Shouchella clausii (strain KSM-K16) (Alkalihalobacillus clausii)).